Consider the following 666-residue polypeptide: DNA mismatch repair protein MutL (666 aa).

The protein belongs to the DNA mismatch repair MutL/HexB family.

In terms of biological role, this protein is involved in the repair of mismatches in DNA. It is required for dam-dependent methyl-directed DNA mismatch repair. May act as a 'molecular matchmaker', a protein that promotes the formation of a stable complex between two or more DNA-binding proteins in an ATP-dependent manner without itself being part of a final effector complex. This chain is DNA mismatch repair protein MutL, found in Clostridium botulinum (strain Loch Maree / Type A3).